A 206-amino-acid polypeptide reads, in one-letter code: Pyridoxine/pyridoxamine 5'-phosphate oxidase (206 aa).

FMN is bound by residues 53–58 (RMVLLK), 68–69 (YT), Lys75, and Gln97. Lys58 is a binding site for substrate. 3 residues coordinate substrate: Tyr115, Arg119, and Ser123. Residues 132–133 (QS) and Trp177 each bind FMN. 183-185 (RLH) contributes to the substrate binding site. Arg187 contributes to the FMN binding site.

This sequence belongs to the pyridoxamine 5'-phosphate oxidase family. Homodimer. FMN serves as cofactor.

It carries out the reaction pyridoxamine 5'-phosphate + O2 + H2O = pyridoxal 5'-phosphate + H2O2 + NH4(+). The catalysed reaction is pyridoxine 5'-phosphate + O2 = pyridoxal 5'-phosphate + H2O2. Its pathway is cofactor metabolism; pyridoxal 5'-phosphate salvage; pyridoxal 5'-phosphate from pyridoxamine 5'-phosphate: step 1/1. It participates in cofactor metabolism; pyridoxal 5'-phosphate salvage; pyridoxal 5'-phosphate from pyridoxine 5'-phosphate: step 1/1. Its function is as follows. Catalyzes the oxidation of either pyridoxine 5'-phosphate (PNP) or pyridoxamine 5'-phosphate (PMP) into pyridoxal 5'-phosphate (PLP). This chain is Pyridoxine/pyridoxamine 5'-phosphate oxidase, found in Rhizobium meliloti (strain 1021) (Ensifer meliloti).